We begin with the raw amino-acid sequence, 1035 residues long: Kinesin-like protein KIN-4A (1035 aa).

The 360-residue stretch at 10–369 (CVKVAVHVRP…LKYANRARNI (360 aa)) folds into the Kinesin motor domain. 89-96 (GQTGSGKT) serves as a coordination point for ATP. Coiled coils occupy residues 380-437 (VADE…LRNH) and 498-702 (MLQD…RKSS). 3 disordered regions span residues 697 to 720 (EARK…HMTE), 766 to 787 (VMSG…NTLS), and 882 to 928 (HSES…PLSP). 2 stretches are compositionally biased toward polar residues: residues 704–716 (RDNS…SPGS) and 778–787 (NGNSRANTLS). Residues 850-904 (NVAADARCQVREKEMEIKEMKEQMTELVTILRHSESRRRETEKQLKQREQAAVTA) are a coiled coil. Basic and acidic residues predominate over residues 882–898 (HSESRRRETEKQLKQRE). Residues 902–926 (VTATTSPGNGNGSVKHSADDSNTPL) are compositionally biased toward polar residues. Positions 971–987 (KKVSIAGQSGKLWRWKR) match the Nuclear localization signal motif. A disordered region spans residues 1014-1035 (DETMTRTRPRPQLLPHRPQRVM).

Belongs to the TRAFAC class myosin-kinesin ATPase superfamily. Kinesin family. KIN-4 subfamily. Homodimer. As to expression, expressed in young tissues with cell divisions, including initiating adventitious roots, primary root tips, flower primordia, intercalary meristems, sub-epidermal regions of young culms and panicles.

It localises to the nucleus. The protein resides in the cytoplasm. The protein localises to the cytoskeleton. With respect to regulation, may be regulated by cyclin-dependent kinase A. Its function is as follows. Microtubule-dependent motor protein involved in the control of the oriented deposition of cellulose microfibrils. Involved in wall biogenesis and modification, and contributes to cell-cycle progression and cell division. Acts as a transcriptional activator in gibberellic acid (GA) biosynthesis pathway. Binds specifically to the DNA sequence 5'-ACCAACTTGAA-3' of the ent-kaurene oxidase 2 (CYP701A6 or OsKO2) promoter. May regulate CYP701A6 gene expression and mediates cell elongation by regulating the GA biosynthesis pathway. This chain is Kinesin-like protein KIN-4A, found in Oryza sativa subsp. japonica (Rice).